The sequence spans 950 residues: MLYSSRGDPEGQPLLLSLLILAMWVVGSGQLHYSVPEEAKHGTFVGRIAQDLGLELAELVPRLFQLDSKGRGDLLEVNLQNGILFVNSRIDREELCGRSAECSIHLEVIVDRPLQVFHVDVEVKDINDNPPVFPATQKNLFIAESRPLDSRFPLEGASDADIGENALLTYRLSPNEYFFLDVPTSNQQVKPLGLVLRKLLDREETPELHLLLTATDGGKPELTGTVQLLITVLDNNDNAPVFDRTLYTVKLPENVSIGTLVIHPNASDLDEGLNGDIIYSFSSDVSPDIKSKFHMDPLSGAITVIGHMDFEESRAHKIPVEAVDKGFPPLAGHCTVLVEVVDVNDNAPQLTIKTLSVPVKEDAQLGTVIALISVTDLDADANGQVTCSLTPHVPFKLVSTYKNYYSLVLDRALDRESVSAYELVVTARDGGSPSLWATARVSVEVADVNDNAPAFAQPEYTVFVKENNPPGCHIFTVSARDADAQENALVSYSLVERRLGERSLWSYVSVHAESGKVYALQPLDHEELELLQFQVSARDAGVPPLGSNVTLQVFVLDENDNAPALLTPRMRGTDGAVSEMVLRSVGAGVVVGKVLAVDADSGYNAWLSYELQPETASASIPFRVGLYTGEISTTRALDETDAPRQRLLVLVKDHGEPALTATATVLVSLVESGQAPKSSSRASVGATGPEVTLVDVNVYLIIAICAVSSLLVLTLLLYTVLRCSAMPTEGECAPGKPTLVCSSAVGSWSYSQQRRQRVCSGEGPQKTDLMAFSPGLSPCAGSTERTGEPSASSDSSGKPRQPNPDWRYSASLRAGMHSSVHLEEAGILRAGPGGPDQQWPTVSSATPEPEAGEVSPPVGAGVNSNSWTFKYGPGNPKQSGPGELPDKFIIPGSPAIISIRQEPANSQIDKSDFITFGKKEETKKKKKKKKGNKTQEKKEKGNSTTDNSDQ.

An N-terminal signal peptide occupies residues 1–29 (MLYSSRGDPEGQPLLLSLLILAMWVVGSG). Cadherin domains follow at residues 30–133 (QLHY…PPVF), 134–242 (PATQ…APVF), 243–350 (DRTL…APQL), 351–455 (TIKT…APAF), 456–565 (AQPE…APAL), and 588–678 (GVVV…APKS). The Extracellular portion of the chain corresponds to 30-697 (QLHYSVPEEA…GPEVTLVDVN (668 aa)). 2 N-linked (GlcNAc...) asparagine glycosylation sites follow: N254 and N265. N-linked (GlcNAc...) asparagine glycosylation is present at N548. A helical membrane pass occupies residues 698–718 (VYLIIAICAVSSLLVLTLLLY). Residues 719–950 (TVLRCSAMPT…GNSTTDNSDQ (232 aa)) are Cytoplasmic-facing. The PXXP 1 repeat unit spans residues 734–737 (PGKP). The tract at residues 734–894 (PGKPTLVCSS…PDKFIIPGSP (161 aa)) is 5 X 4 AA repeats of P-X-X-P. 2 disordered regions span residues 759-808 (CSGE…DWRY) and 827-950 (ILRA…NSDQ). The span at 789–798 (PSASSDSSGK) shows a compositional bias: polar residues. PXXP repeat units lie at residues 799–802 (PRQP), 832–835 (PGGP), 873–876 (PGNP), and 891–894 (PGSP). Residues 909-923 (DKSDFITFGKKEETK) show a composition bias toward basic and acidic residues.

Its subcellular location is the cell membrane. Potential calcium-dependent cell-adhesion protein. May be involved in the establishment and maintenance of specific neuronal connections in the brain. The chain is Protocadherin alpha-9 (PCDHA9) from Pan troglodytes (Chimpanzee).